A 468-amino-acid polypeptide reads, in one-letter code: MKNFMDENFLLQTETAQKLYHEHAAKMPIIDYHCHLIPQMVADDYKFKSLTEIWLGGDHYKWRAMRTNGVDERYCTGKDTTDWEKFEKWAETVPYTFRNPLYHWTHLELKTAFGIDKILSPKTAREIYDECNEKLAQPEYSARGMMRRYHVEVVCTTDDPIDSLEYHIQTRESGFEIKMLPTWRPDKAMAVEVPADFRAYVEKLSAVSGVTISNFDDMIAALRKRHDFFAEQGCRLSDHGIEEFYAEDYTDAEIKAIFNKVYGGAELTKEEILKFKSAMLVIFGEMDWEKGWTQQFHYGAIRNNNTKMFKLLGPDTGFDSIGEFTTAKAMSKFLDRLNVNGKLTKTILYNLNPCANEVIATMLGNFQDGSIAGKIQFGSGWWFLDQKDGMEKQMNALSVLGLLSRFVGMLTDSRSFLSYPRHEYFRRTLCNLVGRDVENGEIPVSEMDRVNQMIEDISYNNAKNFFKF.

Belongs to the metallo-dependent hydrolases superfamily. Uronate isomerase family.

It catalyses the reaction D-glucuronate = D-fructuronate. The enzyme catalyses aldehydo-D-galacturonate = keto-D-tagaturonate. The protein operates within carbohydrate metabolism; pentose and glucuronate interconversion. This is Uronate isomerase from Bacteroides thetaiotaomicron (strain ATCC 29148 / DSM 2079 / JCM 5827 / CCUG 10774 / NCTC 10582 / VPI-5482 / E50).